A 93-amino-acid polypeptide reads, in one-letter code: Defensin-like protein 210 (93 aa).

The N-terminal stretch at 1-19 (MKTIILFLTLLVISSSCTS) is a signal peptide. Cystine bridges form between C63–C80, C66–C85, and C70–C87.

The protein belongs to the DEFL family.

The protein resides in the secreted. The sequence is that of Defensin-like protein 210 from Arabidopsis thaliana (Mouse-ear cress).